Here is a 63-residue protein sequence, read N- to C-terminus: Beta-defensin 4 (63 aa).

The signal sequence occupies residues Met-1 to Thr-22. Residue Gln-23 is modified to Pyrrolidone carboxylic acid. Intrachain disulfides connect Cys-31–Cys-59, Cys-38–Cys-52, and Cys-42–Cys-60.

This sequence belongs to the beta-defensin family. Tongue, esophagus and trachea.

It localises to the secreted. In terms of biological role, exhibits antimicrobial activity against Gram-negative bacteria and Gram-positive bacteria. May act as a ligand for C-C chemokine receptor CCR6. Can bind to mouse (but not human) CCR6 and induce chemotactic activity of CCR6-expressing cells. In Mus musculus (Mouse), this protein is Beta-defensin 4 (Defb4).